The sequence spans 447 residues: Drebrin-like protein A (447 aa).

The 132-residue stretch at 2–133 folds into the ADF-H domain; sequence SVNLSKNGAA…EPESIMEKVA (132 aa). Disordered stretches follow at residues 141–160 and 184–368; these read NFHK…VGSV and KDEE…TENQ. Residues 180–245 adopt a coiled-coil conformation; sequence AKAEKDEEER…EQEETEKQQT (66 aa). The segment covering 184 to 242 has biased composition (basic and acidic residues); the sequence is KDEEERRMEENRRANSEKDRLERERKEREQREAETREQRFRERAKEIDAQRKEQEETEK. Polar residues predominate over residues 246–255; sequence VPASQRSVNP. Residues 319–328 are compositionally biased toward pro residues; that stretch reads PESPVPPVSH. A compositionally biased stretch (acidic residues) spans 345-365; the sequence is QEEENIYQDATEDQNIYEDTT. The 60-residue stretch at 388 to 447 folds into the SH3 domain; that stretch reads EKGVCARALYDYQAADDTEISFDPDDLITQIQFIDEGWWRGFSPAGHFGMFPANYVELLE.

Belongs to the ABP1 family.

It localises to the cytoplasm. It is found in the cytoskeleton. The protein resides in the cell projection. The protein localises to the lamellipodium. Its subcellular location is the ruffle. It localises to the cell cortex. It is found in the cytosol. The protein resides in the synapse. The protein localises to the perikaryon. Its subcellular location is the neuron projection. It localises to the cell membrane. It is found in the cytoplasmic vesicle. The protein resides in the clathrin-coated vesicle membrane. The protein localises to the golgi apparatus membrane. Its subcellular location is the podosome. It localises to the early endosome. It is found in the dendrite. The protein resides in the postsynaptic density. Adapter protein that binds F-actin and dynamin, and thereby plays a role in receptor-mediated endocytosis. Plays a role in the reorganization of the actin cytoskeleton, formation of cell projections, such as neurites, in neuron morphogenesis and synapse formation. Does not bind G-actin and promote actin polymerization by itself, but excerts its functions by interaction with other proteins. Required for the formation of organized podosome rosettes. This chain is Drebrin-like protein A (dbnl-a), found in Xenopus laevis (African clawed frog).